We begin with the raw amino-acid sequence, 136 residues long: Large ribosomal subunit protein uL16 (136 aa).

Belongs to the universal ribosomal protein uL16 family. Part of the 50S ribosomal subunit.

Functionally, binds 23S rRNA and is also seen to make contacts with the A and possibly P site tRNAs. This Buchnera aphidicola subsp. Acyrthosiphon pisum (strain 5A) protein is Large ribosomal subunit protein uL16.